We begin with the raw amino-acid sequence, 160 residues long: Small ribosomal subunit protein uS19v (160 aa).

This sequence belongs to the universal ribosomal protein uS19 family.

It is found in the cytoplasm. The chain is Small ribosomal subunit protein uS19v (RPS15F) from Arabidopsis thaliana (Mouse-ear cress).